A 405-amino-acid polypeptide reads, in one-letter code: SPbeta prophage-derived uncharacterized protein YonJ (405 aa).

Residues 72 to 101 (DESNNSLLELELKKVEIMEERKKLQAVKHE) adopt a coiled-coil conformation.

The polypeptide is SPbeta prophage-derived uncharacterized protein YonJ (yonJ) (Bacillus subtilis (strain 168)).